We begin with the raw amino-acid sequence, 314 residues long: Serine acetyltransferase 1, chloroplastic (314 aa).

This sequence belongs to the transferase hexapeptide repeat family. Homomultimer. Interacts with OASA1 and CYP20-3. Component of the cysteine synthase complex (CSC) composed of two OAS-TL dimers and one SAT hexamer. In terms of tissue distribution, mostly expressed in leaves. Localized in cortex, trichomes and vascular tissues, particularly in phloem.

It is found in the plastid. The protein resides in the chloroplast. The protein localises to the cytoplasm. It catalyses the reaction L-serine + acetyl-CoA = O-acetyl-L-serine + CoA. It functions in the pathway amino-acid biosynthesis; L-cysteine biosynthesis; L-cysteine from L-serine: step 1/2. In terms of biological role, serine acetyltransferase which catalyzes the formation of O-acetyl-L-serine from acetyl-CoA and L-serine. Also displays O-acetylserine (thio1)-lyase activity in vitro. May be involved in detoxification process by mediating the production of glutathione. The protein is Serine acetyltransferase 1, chloroplastic (SAT1) of Arabidopsis thaliana (Mouse-ear cress).